The sequence spans 311 residues: Aspartate carbamoyltransferase catalytic subunit (311 aa).

Carbamoyl phosphate contacts are provided by Arg55 and Thr56. Lys84 lines the L-aspartate pocket. Arg105, His133, and Gln136 together coordinate carbamoyl phosphate. Residues Arg166 and Arg229 each coordinate L-aspartate. The carbamoyl phosphate site is built by Leu268 and Pro269.

It belongs to the aspartate/ornithine carbamoyltransferase superfamily. ATCase family. In terms of assembly, heterododecamer (2C3:3R2) of six catalytic PyrB chains organized as two trimers (C3), and six regulatory PyrI chains organized as three dimers (R2).

The enzyme catalyses carbamoyl phosphate + L-aspartate = N-carbamoyl-L-aspartate + phosphate + H(+). It participates in pyrimidine metabolism; UMP biosynthesis via de novo pathway; (S)-dihydroorotate from bicarbonate: step 2/3. In terms of biological role, catalyzes the condensation of carbamoyl phosphate and aspartate to form carbamoyl aspartate and inorganic phosphate, the committed step in the de novo pyrimidine nucleotide biosynthesis pathway. The polypeptide is Aspartate carbamoyltransferase catalytic subunit (Alkaliphilus metalliredigens (strain QYMF)).